The following is a 374-amino-acid chain: Chaperone protein DnaJ (374 aa).

In terms of domain architecture, J spans 5-70; that stretch reads DYYEVLGVNR…RKRASYDQFG (66 aa). A CR-type zinc finger spans residues 133 to 210; sequence GLSRTIKVPT…CHGQGRQQQT (78 aa). Residues C146, C149, C162, C165, C184, C187, C198, and C201 each coordinate Zn(2+). 4 CXXCXGXG motif repeats span residues 146–153, 162–169, 184–191, and 198–205; these read CKTCNGSG, CPRCNGSG, CSVCRGRG, and CTDCHGQG.

The protein belongs to the DnaJ family. As to quaternary structure, homodimer. It depends on Zn(2+) as a cofactor.

It localises to the cytoplasm. Participates actively in the response to hyperosmotic and heat shock by preventing the aggregation of stress-denatured proteins and by disaggregating proteins, also in an autonomous, DnaK-independent fashion. Unfolded proteins bind initially to DnaJ; upon interaction with the DnaJ-bound protein, DnaK hydrolyzes its bound ATP, resulting in the formation of a stable complex. GrpE releases ADP from DnaK; ATP binding to DnaK triggers the release of the substrate protein, thus completing the reaction cycle. Several rounds of ATP-dependent interactions between DnaJ, DnaK and GrpE are required for fully efficient folding. Also involved, together with DnaK and GrpE, in the DNA replication of plasmids through activation of initiation proteins. The protein is Chaperone protein DnaJ of Coxiella burnetii (strain CbuG_Q212) (Coxiella burnetii (strain Q212)).